A 488-amino-acid polypeptide reads, in one-letter code: 3-octaprenyl-4-hydroxybenzoate carboxy-lyase (488 aa).

Asn-172 lines the Mn(2+) pocket. Prenylated FMN contacts are provided by residues 175–177 (IYR), 189–191 (RWL), and 194–195 (RG). Residue Glu-238 participates in Mn(2+) binding. Asp-287 (proton donor) is an active-site residue.

The protein belongs to the UbiD family. Homohexamer. Prenylated FMN serves as cofactor. Requires Mn(2+) as cofactor.

The protein localises to the cell membrane. The enzyme catalyses a 4-hydroxy-3-(all-trans-polyprenyl)benzoate + H(+) = a 2-(all-trans-polyprenyl)phenol + CO2. It participates in cofactor biosynthesis; ubiquinone biosynthesis. In terms of biological role, catalyzes the decarboxylation of 3-octaprenyl-4-hydroxy benzoate to 2-octaprenylphenol, an intermediate step in ubiquinone biosynthesis. This chain is 3-octaprenyl-4-hydroxybenzoate carboxy-lyase, found in Pseudomonas putida (strain GB-1).